We begin with the raw amino-acid sequence, 109 residues long: Nucleoid-associated protein ETA_24730 (109 aa).

It belongs to the YbaB/EbfC family. As to quaternary structure, homodimer.

Its subcellular location is the cytoplasm. The protein resides in the nucleoid. Binds to DNA and alters its conformation. May be involved in regulation of gene expression, nucleoid organization and DNA protection. This is Nucleoid-associated protein ETA_24730 from Erwinia tasmaniensis (strain DSM 17950 / CFBP 7177 / CIP 109463 / NCPPB 4357 / Et1/99).